Reading from the N-terminus, the 905-residue chain is DNA gyrase subunit A (905 aa).

The region spanning 35–524 (IPDVRDGLKP…GEFDQDIEDL (490 aa)) is the Topo IIA-type catalytic domain. Tyrosine 123 (O-(5'-phospho-DNA)-tyrosine intermediate) is an active-site residue. A GyrA-box motif is present at residues 551–557 (QKRGGKG). Residues 885–905 (TAESEEDSELEEEGLEQSEEV) form a disordered region. Residues 886-905 (AESEEDSELEEEGLEQSEEV) are compositionally biased toward acidic residues.

Belongs to the type II topoisomerase GyrA/ParC subunit family. In terms of assembly, heterotetramer, composed of two GyrA and two GyrB chains. In the heterotetramer, GyrA contains the active site tyrosine that forms a transient covalent intermediate with DNA, while GyrB binds cofactors and catalyzes ATP hydrolysis.

It is found in the cytoplasm. The enzyme catalyses ATP-dependent breakage, passage and rejoining of double-stranded DNA.. Functionally, a type II topoisomerase that negatively supercoils closed circular double-stranded (ds) DNA in an ATP-dependent manner to modulate DNA topology and maintain chromosomes in an underwound state. Negative supercoiling favors strand separation, and DNA replication, transcription, recombination and repair, all of which involve strand separation. Also able to catalyze the interconversion of other topological isomers of dsDNA rings, including catenanes and knotted rings. Type II topoisomerases break and join 2 DNA strands simultaneously in an ATP-dependent manner. The protein is DNA gyrase subunit A of Rickettsia conorii (strain ATCC VR-613 / Malish 7).